The following is a 1396-amino-acid chain: DNA-directed RNA polymerase subunit beta' (1396 aa).

4 residues coordinate Zn(2+): Cys-72, Cys-74, Cys-87, and Cys-90. The Mg(2+) site is built by Asp-463, Asp-465, and Asp-467. The Zn(2+) site is built by Cys-814, Cys-889, Cys-896, and Cys-899.

This sequence belongs to the RNA polymerase beta' chain family. As to quaternary structure, the RNAP catalytic core consists of 2 alpha, 1 beta, 1 beta' and 1 omega subunit. When a sigma factor is associated with the core the holoenzyme is formed, which can initiate transcription. The cofactor is Mg(2+). Zn(2+) is required as a cofactor.

It carries out the reaction RNA(n) + a ribonucleoside 5'-triphosphate = RNA(n+1) + diphosphate. Functionally, DNA-dependent RNA polymerase catalyzes the transcription of DNA into RNA using the four ribonucleoside triphosphates as substrates. The chain is DNA-directed RNA polymerase subunit beta' from Chlamydia trachomatis serovar A (strain ATCC VR-571B / DSM 19440 / HAR-13).